A 182-amino-acid polypeptide reads, in one-letter code: Ribosome-recycling factor (182 aa).

The protein belongs to the RRF family.

It is found in the cytoplasm. Its function is as follows. Responsible for the release of ribosomes from messenger RNA at the termination of protein biosynthesis. May increase the efficiency of translation by recycling ribosomes from one round of translation to another. This Nostoc sp. (strain PCC 7120 / SAG 25.82 / UTEX 2576) protein is Ribosome-recycling factor.